The chain runs to 138 residues: NADH dehydrogenase [ubiquinone] iron-sulfur protein 2, mitochondrial (138 aa).

Belongs to the complex I 49 kDa subunit family. Core subunit of respiratory chain NADH dehydrogenase (Complex I) which is composed of 45 different subunits. Component of the iron-sulfur (IP) fragment of the enzyme. Interacts with NDUFAF3. Interacts with NDUFAF7. Interacts with CERS2. Requires [4Fe-4S] cluster as cofactor. Post-translationally, dimethylation at Arg-118 by NDUFAF7 takes place after NDUFS2 assembles into the complex I, leading to stabilize the early intermediate complex.

The protein resides in the mitochondrion inner membrane. The enzyme catalyses a ubiquinone + NADH + 5 H(+)(in) = a ubiquinol + NAD(+) + 4 H(+)(out). Its function is as follows. Core subunit of the mitochondrial membrane respiratory chain NADH dehydrogenase (Complex I) which catalyzes electron transfer from NADH through the respiratory chain, using ubiquinone as an electron acceptor. Essential for the catalytic activity and assembly of complex I. Redox-sensitive, critical component of the oxygen-sensing pathway in the pulmonary vasculature which plays a key role in acute pulmonary oxygen-sensing and hypoxic pulmonary vasoconstriction. Plays an important role in carotid body sensing of hypoxia. Essential for glia-like neural stem and progenitor cell proliferation, differentiation and subsequent oligodendrocyte or neuronal maturation. The chain is NADH dehydrogenase [ubiquinone] iron-sulfur protein 2, mitochondrial from Mesocricetus auratus (Golden hamster).